Consider the following 643-residue polypeptide: Threonine--tRNA ligase (643 aa).

Residues 1–61 (MIEIFIEDLN…NQSGNLKFLK (61 aa)) enclose the TGS domain. The tract at residues 246-539 (DHRKIGKDLE…LLEHYAGFLP (294 aa)) is catalytic. Zn(2+) contacts are provided by C339, H390, and H516.

The protein belongs to the class-II aminoacyl-tRNA synthetase family. In terms of assembly, homodimer. Zn(2+) serves as cofactor.

Its subcellular location is the cytoplasm. The enzyme catalyses tRNA(Thr) + L-threonine + ATP = L-threonyl-tRNA(Thr) + AMP + diphosphate + H(+). In terms of biological role, catalyzes the attachment of threonine to tRNA(Thr) in a two-step reaction: L-threonine is first activated by ATP to form Thr-AMP and then transferred to the acceptor end of tRNA(Thr). Also edits incorrectly charged L-seryl-tRNA(Thr). In Sulfurihydrogenibium sp. (strain YO3AOP1), this protein is Threonine--tRNA ligase.